The primary structure comprises 217 residues: ATP-dependent Clp protease proteolytic subunit 2 (217 aa).

The active-site Nucleophile is the serine 113. The active site involves histidine 138.

It belongs to the peptidase S14 family. Fourteen ClpP subunits assemble into 2 heptameric rings which stack back to back to give a disk-like structure with a central cavity, resembling the structure of eukaryotic proteasomes.

The protein localises to the cytoplasm. The catalysed reaction is Hydrolysis of proteins to small peptides in the presence of ATP and magnesium. alpha-casein is the usual test substrate. In the absence of ATP, only oligopeptides shorter than five residues are hydrolyzed (such as succinyl-Leu-Tyr-|-NHMec, and Leu-Tyr-Leu-|-Tyr-Trp, in which cleavage of the -Tyr-|-Leu- and -Tyr-|-Trp bonds also occurs).. Its function is as follows. Cleaves peptides in various proteins in a process that requires ATP hydrolysis. Has a chymotrypsin-like activity. Plays a major role in the degradation of misfolded proteins. The sequence is that of ATP-dependent Clp protease proteolytic subunit 2 from Frankia casuarinae (strain DSM 45818 / CECT 9043 / HFP020203 / CcI3).